The sequence spans 167 residues: Transcription antitermination protein NusB (167 aa).

Residues 1 to 32 form a disordered region; the sequence is MSDTPETGKPAAGTKPAARTEAKAPPKSARRR.

The protein belongs to the NusB family.

Involved in transcription antitermination. Required for transcription of ribosomal RNA (rRNA) genes. Binds specifically to the boxA antiterminator sequence of the ribosomal RNA (rrn) operons. This chain is Transcription antitermination protein NusB, found in Cupriavidus pinatubonensis (strain JMP 134 / LMG 1197) (Cupriavidus necator (strain JMP 134)).